The primary structure comprises 488 residues: Intron-encoded DNA endonuclease I-AniI (488 aa).

The segment at 1–169 (MRILKSHPLL…DIVEFIWGGL (169 aa)) is cobA exon 1 encoded. The interval 170 to 488 (YTDEPQCGDV…SEKIKIPSNY (319 aa)) is cobA intron encoded.

This sequence in the C-terminal section; belongs to the LAGLIDADG endonuclease family. In terms of assembly, homodimer. Mg(2+) is required as a cofactor. Post-translationally, the mature protein may arise from proteolytic cleavage of an in-frame translation of cobA exon 1 plus intron, containing the I-AniI open reading frame. Cleavage may take place close to Met-213 resulting in an active endonuclease/maturase of about 30 kDa.

The protein localises to the mitochondrion. Mitochondrial DNA endonuclease and mRNA maturase involved in intron homing and required for splicing of the cytochrome b (cobA) gene intron, containing its own coding sequence. The protein stimulates the intrinsic ribozyme activity of the intron through binding to and stabilizing specific secondary and tertiary structure elements in the RNA. As an endonuclease it introduces a specific double-strand break at the junction of the two exons the cobA gene and thus mediates the insertion of an intron, containing its own coding sequence (group I intron), into an intronless gene. Recognizes with limited specificity and cleaves the sequence 5'-GAGGAGGTTTCTCTGTA-3'. The proteins RNA and DNA recognition and binding surfaces are independent. The polypeptide is Intron-encoded DNA endonuclease I-AniI (I-AniI) (Emericella nidulans (Aspergillus nidulans)).